We begin with the raw amino-acid sequence, 455 residues long: 2-oxoisovalerate dehydrogenase subunit alpha, mitochondrial (455 aa).

The N-terminal 55 residues, 1–55, are a transit peptide targeting the mitochondrion; that stretch reads MQGSAKMAMAVAVAVARVWRPSRGLGRTGLPLLRLLGARGLARFHPHRWQQQQHF. Thiamine diphosphate contacts are provided by Tyr-168 and Arg-169. Ser-216 lines the K(+) pocket. Ser-217 is a binding site for thiamine diphosphate. 3 residues coordinate K(+): Pro-218, Thr-221, and Gln-222. Glu-248 is a binding site for Mg(2+). Thiamine diphosphate contacts are provided by Gly-249, Ala-250, and Arg-275. Residues Asn-277 and Tyr-279 each coordinate Mg(2+). His-346 lines the thiamine diphosphate pocket. A Phosphoserine; by BCKDK modification is found at Ser-347. Phosphothreonine is present on Thr-348. Residues Ser-349 and Ser-357 each carry the phosphoserine modification. Lys-366 is modified (N6-acetyllysine; alternate). N6-succinyllysine; alternate is present on Lys-366. The residue at position 390 (Lys-390) is an N6-succinyllysine.

Belongs to the BCKDHA family. In terms of assembly, heterotetramer of 2 alpha/BCKDHA and 2 beta chains/BCKDHB that forms the branched-chain alpha-keto acid decarboxylase (E1) component of the BCKD complex. The branched-chain alpha-ketoacid dehydrogenase is a large complex composed of three major building blocks E1, E2 and E3. It is organized around E2, a 24-meric cubic core composed of DBT, to which are associated 6 to 12 copies of E1, and approximately 6 copies of the dehydrogenase E3, a DLD dimer. Interacts with PPM1K. Requires thiamine diphosphate as cofactor. Mg(2+) is required as a cofactor. Phosphorylated at Ser-347 by BCKDK and dephosphorylated by protein phosphatase PPM1K. As to expression, expressed in kidney (at protein level).

Its subcellular location is the mitochondrion matrix. The enzyme catalyses N(6)-[(R)-lipoyl]-L-lysyl-[protein] + 3-methyl-2-oxobutanoate + H(+) = N(6)-[(R)-S(8)-2-methylpropanoyldihydrolipoyl]-L-lysyl-[protein] + CO2. Together with BCKDHB forms the heterotetrameric E1 subunit of the mitochondrial branched-chain alpha-ketoacid dehydrogenase (BCKD) complex. The BCKD complex catalyzes the multi-step oxidative decarboxylation of alpha-ketoacids derived from the branched-chain amino-acids valine, leucine and isoleucine producing CO2 and acyl-CoA which is subsequently utilized to produce energy. The E1 subunit catalyzes the first step with the decarboxylation of the alpha-ketoacid forming an enzyme-product intermediate. A reductive acylation mediated by the lipoylamide cofactor of E2 extracts the acyl group from the E1 active site for the next step of the reaction. The chain is 2-oxoisovalerate dehydrogenase subunit alpha, mitochondrial (BCKDHA) from Bos taurus (Bovine).